The following is a 264-amino-acid chain: MGDSDDFYWNWNNEAVCNWIEQLGFPHKEAFEDYHILGKDIDLLSSNDLRDMGIESVGHRIDILSAIQSMKKQQKDKLQQENKDQELKNIEESYKKLEEKTEHLSDDNVSLEKRVEYLETENTKLVKTLNSLNSEFLQLLRKIAINVKEGRQLTTENSSDTSSMTHPVQPSPSVLGSFDLEVNDSLTNAEKNRKLNVNLTYNEVLCSMLQRYRIDPNTWMSYDLLINYDDKEHAIPMDVKPLQLFRNLQKRGKSPSFVLSRRSC.

The region spanning 11–73 (WNNEAVCNWI…LSAIQSMKKQ (63 aa)) is the SAM domain. Residues 111–139 (LEKRVEYLETENTKLVKTLNSLNSEFLQL) are leucine-zipper. The Ras-associating domain occupies 176–264 (GSFDLEVNDS…PSFVLSRRSC (89 aa)).

Homodimer or heterodimer with another leucine-zipper protein.

Functionally, essential for mating and meiosis. The polypeptide is Sexual differentiation protein ste4 (ste4) (Schizosaccharomyces pombe (strain 972 / ATCC 24843) (Fission yeast)).